The sequence spans 236 residues: MNSWNINLEDMMEAGVYLGHQARKWNPKMAPYIFAERKGIHIINLTQTARFLTEACDLLFNTAKNGEQFLIVGTKYQAADLVALTAKKSRCHYVNQKWLGGMLTNWTTIKKRLKKLQELESLESINGFDRFPKKEASNLKRQLAQLRKYLGGIRHMTKLPDIVIIIDQQHELTALKECLILGIPTICFVDTDCDPDLTDIPIPANDDSRASIQWILNKLTNSIREGRAFSKNDSIN.

It belongs to the universal ribosomal protein uS2 family.

The protein resides in the plastid. It localises to the chloroplast. This is Small ribosomal subunit protein uS2c (rps2) from Chaetosphaeridium globosum (Charophycean green alga).